The sequence spans 233 residues: Phosphoglycolate phosphatase (233 aa).

Residue Asp-9 is the Nucleophile of the active site. Mg(2+) contacts are provided by Asp-9 and Asp-11. Lys-154 serves as a coordination point for substrate. Positions 177 and 181 each coordinate Mg(2+).

It belongs to the archaeal SPP-like hydrolase family. It depends on Mg(2+) as a cofactor.

The catalysed reaction is 2-phosphoglycolate + H2O = glycolate + phosphate. Functionally, catalyzes the dephosphorylation of 2-phosphoglycolate. This Pyrococcus abyssi (strain GE5 / Orsay) protein is Phosphoglycolate phosphatase.